The following is a 553-amino-acid chain: Fusion glycoprotein F0 (553 aa).

A signal peptide spans 1–31 (MGSRPFTKNPAPMMLTIRVALVLSCICPANS). At 31–500 (SIDGRPFAAA…VNVKLTSTSA (470 aa)) the chain is on the extracellular side. Intrachain disulfides connect C76-C199, C338-C347, C362-C370, C394-C399, and C401-C424. N-linked (GlcNAc...) asparagine; by host glycosylation is found at N85 and N191. N366 is a glycosylation site (N-linked (GlcNAc...) asparagine; by host). N-linked (GlcNAc...) asparagine; by host glycosylation is found at N447 and N471. Residues 463 to 499 (ISTELGNVNNSISNALNKLEESNRKLDKVNVKLTSTS) are a coiled coil. A helical membrane pass occupies residues 501 to 521 (LITYIVLTIISLVFGILSLIL). Over 522–553 (ACYLMYKQKAQQKTLLWLGNNTLDQMRATTKM) the chain is Cytoplasmic. Residue C523 is the site of S-palmitoyl cysteine; by host attachment.

It belongs to the paramyxoviruses fusion glycoprotein family. In terms of assembly, homotrimer of disulfide-linked F1-F2. The inactive precursor F0 is glycosylated and proteolytically cleaved into F1 and F2 to be functionally active. The cleavage is mediated by cellular proteases during the transport and maturation of the polypeptide.

It localises to the virion membrane. The protein resides in the host cell membrane. In terms of biological role, class I viral fusion protein. Under the current model, the protein has at least 3 conformational states: pre-fusion native state, pre-hairpin intermediate state, and post-fusion hairpin state. During viral and plasma cell membrane fusion, the heptad repeat (HR) regions assume a trimer-of-hairpins structure, positioning the fusion peptide in close proximity to the C-terminal region of the ectodomain. The formation of this structure appears to drive apposition and subsequent fusion of viral and plasma cell membranes. Directs fusion of viral and cellular membranes leading to delivery of the nucleocapsid into the cytoplasm. This fusion is pH independent and occurs directly at the outer cell membrane. The trimer of F1-F2 (F protein) probably interacts with HN at the virion surface. Upon HN binding to its cellular receptor, the hydrophobic fusion peptide is unmasked and interacts with the cellular membrane, inducing the fusion between cell and virion membranes. Later in infection, F proteins expressed at the plasma membrane of infected cells could mediate fusion with adjacent cells to form syncytia, a cytopathic effect that could lead to tissue necrosis. The chain is Fusion glycoprotein F0 (F) from Gallus gallus (Chicken).